Here is a 443-residue protein sequence, read N- to C-terminus: Glutamate-1-semialdehyde 2,1-aminomutase (443 aa).

Position 277 is an N6-(pyridoxal phosphate)lysine (Lys277).

It belongs to the class-III pyridoxal-phosphate-dependent aminotransferase family. HemL subfamily. Homodimer. The cofactor is pyridoxal 5'-phosphate.

The protein localises to the cytoplasm. It carries out the reaction (S)-4-amino-5-oxopentanoate = 5-aminolevulinate. Its pathway is porphyrin-containing compound metabolism; protoporphyrin-IX biosynthesis; 5-aminolevulinate from L-glutamyl-tRNA(Glu): step 2/2. The chain is Glutamate-1-semialdehyde 2,1-aminomutase from Pseudarthrobacter chlorophenolicus (strain ATCC 700700 / DSM 12829 / CIP 107037 / JCM 12360 / KCTC 9906 / NCIMB 13794 / A6) (Arthrobacter chlorophenolicus).